A 228-amino-acid polypeptide reads, in one-letter code: Large ribosomal subunit protein mL64 (228 aa).

2 disordered regions span residues P20–N44 and Q186–S228. A coiled-coil region spans residues T98–A207. Residues K184–E200 carry the Nuclear localization signal motif. The span at Q186–R202 shows a compositional bias: basic and acidic residues. Positions Q212–S228 are enriched in low complexity.

It belongs to the mitochondrion-specific ribosomal protein mL64 family. As to quaternary structure, component of the mitochondrial ribosome large subunit (39S) which comprises a 16S rRNA and about 50 distinct proteins. Interacts with GADD45A, GADD45B and GADD45G. Interacts with NR4A1 via the NR4A1 AB domain. Interacts with ATAD3A and ATAD3B.

It is found in the mitochondrion. Its subcellular location is the nucleus. Its function is as follows. Acts as a negative regulator of G1 to S cell cycle phase progression by inhibiting cyclin-dependent kinases. Inhibitory effects are additive with GADD45 proteins but also occur in the absence of GADD45 proteins. Acts as a repressor of the orphan nuclear receptor NR4A1 by inhibiting AB domain-mediated transcriptional activity. May be involved in the hormone-mediated regulation of NR4A1 transcriptional activity. May play a role in mitochondrial protein synthesis. The sequence is that of Large ribosomal subunit protein mL64 (Gadd45gip1) from Rattus norvegicus (Rat).